A 129-amino-acid chain; its full sequence is MARVTVEDCIDKVDNRFELVLLAAHRARMISSGAQITVDRDNDKNPVVALREIADEHVGPEDLKEDLIHSLQKYTEVDEPEPEAVPMIASGDSSGGEDSDVMLDRMTEEELLAGLQGLVPPEHTDDDEG.

The segment at 76-100 (EVDEPEPEAVPMIASGDSSGGEDSD) is disordered.

Belongs to the RNA polymerase subunit omega family. As to quaternary structure, the RNAP catalytic core consists of 2 alpha, 1 beta, 1 beta' and 1 omega subunit. When a sigma factor is associated with the core the holoenzyme is formed, which can initiate transcription.

The catalysed reaction is RNA(n) + a ribonucleoside 5'-triphosphate = RNA(n+1) + diphosphate. Promotes RNA polymerase assembly. Latches the N- and C-terminal regions of the beta' subunit thereby facilitating its interaction with the beta and alpha subunits. In Xanthobacter autotrophicus (strain ATCC BAA-1158 / Py2), this protein is DNA-directed RNA polymerase subunit omega.